Here is a 164-residue protein sequence, read N- to C-terminus: 3-hydroxyacyl-[acyl-carrier-protein] dehydratase FabZ (164 aa).

His70 is a catalytic residue.

Belongs to the thioester dehydratase family. FabZ subfamily.

It localises to the cytoplasm. It carries out the reaction a (3R)-hydroxyacyl-[ACP] = a (2E)-enoyl-[ACP] + H2O. Involved in unsaturated fatty acids biosynthesis. Catalyzes the dehydration of short chain beta-hydroxyacyl-ACPs and long chain saturated and unsaturated beta-hydroxyacyl-ACPs. The protein is 3-hydroxyacyl-[acyl-carrier-protein] dehydratase FabZ of Synechocystis sp. (strain ATCC 27184 / PCC 6803 / Kazusa).